Reading from the N-terminus, the 596-residue chain is NADH-quinone oxidoreductase subunit C/D (596 aa).

Residues 1-186 (MTDLTAQEPA…SPFELTKAKQ (186 aa)) form an NADH dehydrogenase I subunit C region. The tract at residues 210-596 (DFMFLNLGPN…IDFVMSDVDR (387 aa)) is NADH dehydrogenase I subunit D.

This sequence in the N-terminal section; belongs to the complex I 30 kDa subunit family. In the C-terminal section; belongs to the complex I 49 kDa subunit family. In terms of assembly, NDH-1 is composed of 13 different subunits. Subunits NuoB, CD, E, F, and G constitute the peripheral sector of the complex.

It localises to the cell inner membrane. The enzyme catalyses a quinone + NADH + 5 H(+)(in) = a quinol + NAD(+) + 4 H(+)(out). In terms of biological role, NDH-1 shuttles electrons from NADH, via FMN and iron-sulfur (Fe-S) centers, to quinones in the respiratory chain. The immediate electron acceptor for the enzyme in this species is believed to be ubiquinone. Couples the redox reaction to proton translocation (for every two electrons transferred, four hydrogen ions are translocated across the cytoplasmic membrane), and thus conserves the redox energy in a proton gradient. This is NADH-quinone oxidoreductase subunit C/D from Shigella flexneri serotype 5b (strain 8401).